Consider the following 387-residue polypeptide: Phosphoglycerate kinase (387 aa).

Substrate contacts are provided by residues 21–23 (DLN), R36, 59–62 (HLGR), R113, and R146. ATP-binding positions include K197, E314, and 340–343 (GGDT).

This sequence belongs to the phosphoglycerate kinase family. In terms of assembly, monomer.

It is found in the cytoplasm. The catalysed reaction is (2R)-3-phosphoglycerate + ATP = (2R)-3-phospho-glyceroyl phosphate + ADP. It participates in carbohydrate degradation; glycolysis; pyruvate from D-glyceraldehyde 3-phosphate: step 2/5. This is Phosphoglycerate kinase from Tolumonas auensis (strain DSM 9187 / NBRC 110442 / TA 4).